The sequence spans 1008 residues: Kinesin-like protein KIN-5C (1008 aa).

The Kinesin motor domain occupies 12–359 (NVQVLLRCRP…LDYAHRAKSI (348 aa)). 98 to 105 (GQTGTGKT) is a binding site for ATP. A coiled-coil region spans residues 402-459 (KDRYQQEENERKAMADQIEQMTTSLEANQKQINDLQEKYDSELQHSADLSKKLEATEK). Disordered stretches follow at residues 910–931 (VEAH…TAGI), 943–962 (YKDY…EVPS), and 975–1008 (ESLM…TINN). The span at 913–925 (HLGESQHLQESHS) shows a compositional bias: basic and acidic residues. A compositionally biased stretch (basic and acidic residues) spans 979–995 (DEFRENHPYEPSKDRRP).

Belongs to the TRAFAC class myosin-kinesin ATPase superfamily. Kinesin family. KIN-5/BimC subfamily.

It is found in the cytoplasm. Its subcellular location is the cytoskeleton. The protein localises to the spindle. Its function is as follows. Responsible for microtubule translocation. May be important for the organization of phragmoplast-specific arrays of microtubules. Plays an essential role in stabilizing the mitotic spindle. Required during mitotic cytokinesis. The sequence is that of Kinesin-like protein KIN-5C from Oryza sativa subsp. japonica (Rice).